Consider the following 99-residue polypeptide: MPEISRDQVAHLAKLARLALSEEELQQFAGQIDDIVGHVSAVQNVDAEGVEPMSHPHSIMTTMRDDVVVKTLTPEQALDQAPAVEDGRFMVPQILGEGD.

This sequence belongs to the GatC family. In terms of assembly, heterotrimer of A, B and C subunits.

It catalyses the reaction L-glutamyl-tRNA(Gln) + L-glutamine + ATP + H2O = L-glutaminyl-tRNA(Gln) + L-glutamate + ADP + phosphate + H(+). The catalysed reaction is L-aspartyl-tRNA(Asn) + L-glutamine + ATP + H2O = L-asparaginyl-tRNA(Asn) + L-glutamate + ADP + phosphate + 2 H(+). Its function is as follows. Allows the formation of correctly charged Asn-tRNA(Asn) or Gln-tRNA(Gln) through the transamidation of misacylated Asp-tRNA(Asn) or Glu-tRNA(Gln) in organisms which lack either or both of asparaginyl-tRNA or glutaminyl-tRNA synthetases. The reaction takes place in the presence of glutamine and ATP through an activated phospho-Asp-tRNA(Asn) or phospho-Glu-tRNA(Gln). The protein is Aspartyl/glutamyl-tRNA(Asn/Gln) amidotransferase subunit C of Corynebacterium efficiens (strain DSM 44549 / YS-314 / AJ 12310 / JCM 11189 / NBRC 100395).